The sequence spans 216 residues: MIF4G domain-containing protein A (216 aa).

The MIF4G domain maps to 2-199 (DSAWTALDME…LEILEFRASG (198 aa)).

It belongs to the MIF4GD family. Interacts with eif4g1, eif4g2 and slbp; probably tethered by SLBP to the 3'-end of mRNAs ending with the histone stem-loop, it also interacts with eif4g1 which is bound to their 5'-end.

The protein resides in the cytoplasm. Its subcellular location is the nucleus. Its function is as follows. Functions in replication-dependent translation of histone mRNAs which differ from other eukaryotic mRNAs in that they do not end with a poly-A tail but a stem-loop. May participate in circularizing those mRNAs specifically enhancing their translation. The polypeptide is MIF4G domain-containing protein A (mif4gda) (Danio rerio (Zebrafish)).